We begin with the raw amino-acid sequence, 642 residues long: LIM domain kinase 2 (642 aa).

2 consecutive LIM zinc-binding domains span residues C12 to D63 and C72 to C124. The PDZ domain occupies L152–P239. The segment at R282–L304 is disordered. Low complexity predominate over residues R286–L304. A Protein kinase domain is found at L331–L608. ATP-binding positions include L337–A345 and K360. The active site involves D451. T505 carries the phosphothreonine modification.

This sequence belongs to the protein kinase superfamily. TKL Ser/Thr protein kinase family. As to quaternary structure, binds ROCK1 and LKAP. As to expression, expressed predominantly in the lung, and faintly in the kidney, liver, brain, spleen, gizzard, and intestine.

It localises to the cytoplasm. Its subcellular location is the cytoskeleton. It is found in the spindle. The protein resides in the microtubule organizing center. The protein localises to the centrosome. The enzyme catalyses L-seryl-[protein] + ATP = O-phospho-L-seryl-[protein] + ADP + H(+). The catalysed reaction is L-threonyl-[protein] + ATP = O-phospho-L-threonyl-[protein] + ADP + H(+). In terms of biological role, serine/threonine-protein kinase that plays an essential role in the regulation of actin filament dynamics. Acts downstream of several Rho family GTPase signal transduction pathways. Involved in astral microtubule organization and mitotic spindle orientation during early stages of mitosis by mediating phosphorylation of TPPP. This chain is LIM domain kinase 2 (LIMK2), found in Gallus gallus (Chicken).